The chain runs to 265 residues: Orotidine 5'-phosphate decarboxylase (265 aa).

Substrate-binding positions include Asp-37, 59 to 61 (KTH), 91 to 100 (DRKFADIGNT), Tyr-217, and Arg-235. Lys-93 (proton donor) is an active-site residue.

The protein belongs to the OMP decarboxylase family.

The enzyme catalyses orotidine 5'-phosphate + H(+) = UMP + CO2. The protein operates within pyrimidine metabolism; UMP biosynthesis via de novo pathway; UMP from orotate: step 2/2. The polypeptide is Orotidine 5'-phosphate decarboxylase (URA3) (Diutina rugosa (Yeast)).